A 453-amino-acid polypeptide reads, in one-letter code: Homogentisate 1,2-dioxygenase (453 aa).

The Proton acceptor role is filled by His306. Residues His349 and Glu355 each coordinate Fe cation. Homogentisate contacts are provided by Tyr364 and His385. Residue His385 coordinates Fe cation.

This sequence belongs to the homogentisate dioxygenase family. Hexamer; dimer of trimers. The cofactor is Fe cation.

The enzyme catalyses homogentisate + O2 = 4-maleylacetoacetate + H(+). Its pathway is amino-acid degradation; L-phenylalanine degradation; acetoacetate and fumarate from L-phenylalanine: step 4/6. Involved in the catabolism of homogentisate (2,5-dihydroxyphenylacetate or 2,5-OH-PhAc), a central intermediate in the degradation of phenylalanine and tyrosine. Catalyzes the oxidative ring cleavage of the aromatic ring of homogentisate to yield maleylacetoacetate. The chain is Homogentisate 1,2-dioxygenase from Rhizobium leguminosarum bv. trifolii (strain WSM2304).